A 104-amino-acid polypeptide reads, in one-letter code: Large ribosomal subunit protein uL24 (104 aa).

This sequence belongs to the universal ribosomal protein uL24 family. Part of the 50S ribosomal subunit.

Functionally, one of two assembly initiator proteins, it binds directly to the 5'-end of the 23S rRNA, where it nucleates assembly of the 50S subunit. Its function is as follows. One of the proteins that surrounds the polypeptide exit tunnel on the outside of the subunit. This is Large ribosomal subunit protein uL24 from Serratia proteamaculans (strain 568).